The following is a 169-amino-acid chain: Transmembrane protein 89 (169 aa).

A signal peptide spans 1–22 (MLYTLLLVPSLFLLVMPVPSQG). The Extracellular segment spans residues 23 to 75 (WSRPLWYQVGLDLQPWGCQPNSPDIWGCQPNSLDSCKNSLGCPGYWLGLGGNR). A helical membrane pass occupies residues 76–96 (IYPVAGVTITTTMLLVVSRVI). The Cytoplasmic segment spans residues 97–169 (VHRWRAKVAK…QIKGSPPQSG (73 aa)).

The protein resides in the membrane. The protein is Transmembrane protein 89 (Tmem89) of Mus musculus (Mouse).